Reading from the N-terminus, the 562-residue chain is Arginine--tRNA ligase (562 aa).

Residues 121–131 (PNIAKPMGMGH) carry the 'HIGH' region motif.

The protein belongs to the class-I aminoacyl-tRNA synthetase family. As to quaternary structure, monomer.

It is found in the cytoplasm. The catalysed reaction is tRNA(Arg) + L-arginine + ATP = L-arginyl-tRNA(Arg) + AMP + diphosphate. The polypeptide is Arginine--tRNA ligase (Limosilactobacillus reuteri (strain DSM 20016) (Lactobacillus reuteri)).